A 255-amino-acid chain; its full sequence is tRNA uridine(34) hydroxylase (255 aa).

Positions 131 to 225 (AAPDTLVLDT…YLEEVPEAQS (95 aa)) constitute a Rhodanese domain. Cys185 acts as the Cysteine persulfide intermediate in catalysis.

Belongs to the TrhO family.

The catalysed reaction is uridine(34) in tRNA + AH2 + O2 = 5-hydroxyuridine(34) in tRNA + A + H2O. Catalyzes oxygen-dependent 5-hydroxyuridine (ho5U) modification at position 34 in tRNAs. The sequence is that of tRNA uridine(34) hydroxylase from Bradyrhizobium diazoefficiens (strain JCM 10833 / BCRC 13528 / IAM 13628 / NBRC 14792 / USDA 110).